The chain runs to 129 residues: Photosystem II reaction center Psb28 protein (129 aa).

The interval 110–129 is disordered; it reads GLGYSNNSGNNEGADEASEG.

It belongs to the Psb28 family. Part of the photosystem II complex.

The protein resides in the cellular thylakoid membrane. This Synechococcus sp. (strain WH7803) protein is Photosystem II reaction center Psb28 protein.